The chain runs to 192 residues: NADH dehydrogenase [ubiquinone] iron-sulfur protein 3 (192 aa).

It belongs to the complex I 30 kDa subunit family. As to quaternary structure, complex I is composed of about 45 different subunits. This is a component of the iron-sulfur (IP) fragment of the enzyme.

Its subcellular location is the mitochondrion inner membrane. It catalyses the reaction a ubiquinone + NADH + 5 H(+)(in) = a ubiquinol + NAD(+) + 4 H(+)(out). Core subunit of the mitochondrial membrane respiratory chain NADH dehydrogenase (Complex I) that is believed to belong to the minimal assembly required for catalysis. Complex I functions in the transfer of electrons from NADH to the respiratory chain. The immediate electron acceptor for the enzyme is believed to be ubiquinone. The chain is NADH dehydrogenase [ubiquinone] iron-sulfur protein 3 (NAD9) from Patellifolia webbiana (Patellaria webbiana).